The sequence spans 61 residues: Small ribosomal subunit protein uS14 (61 aa).

Zn(2+) contacts are provided by cysteine 24, cysteine 27, cysteine 40, and cysteine 43.

Belongs to the universal ribosomal protein uS14 family. Zinc-binding uS14 subfamily. As to quaternary structure, part of the 30S ribosomal subunit. Contacts proteins S3 and S10. It depends on Zn(2+) as a cofactor.

In terms of biological role, binds 16S rRNA, required for the assembly of 30S particles and may also be responsible for determining the conformation of the 16S rRNA at the A site. The protein is Small ribosomal subunit protein uS14 of Campylobacter fetus subsp. fetus (strain 82-40).